Here is a 978-residue protein sequence, read N- to C-terminus: Regulator of telomere elongation helicase 1 homolog (978 aa).

Residues Asn7–Thr318 form the Helicase ATP-binding domain. Ser42–Thr49 is a binding site for ATP. Residues Cys159, Cys177, Cys186, and Cys222 each coordinate [4Fe-4S] cluster. Residues Asp265–His268 carry the DEAH box motif.

It belongs to the helicase family. RAD3/XPD subfamily.

It is found in the nucleus. It carries out the reaction ATP + H2O = ADP + phosphate + H(+). Functionally, a probable ATP-dependent DNA helicase implicated in DNA repair and the maintenance of genomic stability. Acts as an anti-recombinase to counteract toxic recombination and limit crossover during meiosis. Regulates meiotic recombination and crossover homeostasis by physically dissociating strand invasion events and thereby promotes noncrossover repair by meiotic synthesis dependent strand annealing (SDSA) as well as disassembly of D loop recombination intermediates. The sequence is that of Regulator of telomere elongation helicase 1 homolog from Culex quinquefasciatus (Southern house mosquito).